A 254-amino-acid chain; its full sequence is 3-deoxy-manno-octulosonate cytidylyltransferase (254 aa).

Belongs to the KdsB family.

Its subcellular location is the cytoplasm. It catalyses the reaction 3-deoxy-alpha-D-manno-oct-2-ulosonate + CTP = CMP-3-deoxy-beta-D-manno-octulosonate + diphosphate. The protein operates within nucleotide-sugar biosynthesis; CMP-3-deoxy-D-manno-octulosonate biosynthesis; CMP-3-deoxy-D-manno-octulosonate from 3-deoxy-D-manno-octulosonate and CTP: step 1/1. Its pathway is bacterial outer membrane biogenesis; lipopolysaccharide biosynthesis. In terms of biological role, activates KDO (a required 8-carbon sugar) for incorporation into bacterial lipopolysaccharide in Gram-negative bacteria. This is 3-deoxy-manno-octulosonate cytidylyltransferase from Bordetella pertussis (strain Tohama I / ATCC BAA-589 / NCTC 13251).